Here is a 186-residue protein sequence, read N- to C-terminus: PRA1 family protein G2 (186 aa).

Transmembrane regions (helical) follow at residues 66 to 86, 87 to 107, 119 to 139, and 142 to 162; these read YFFVNYTIIVSTCAAFALITA, SPVALIVVGAIIALWLIFHFF, VGDRTVLLFLVLASVWAIWFT, and AVNLAVGVSVGLLLCIIHAVF.

Belongs to the PRA1 family. As to expression, expressed in roots and trichomes.

Its subcellular location is the endoplasmic reticulum membrane. May be involved in both secretory and endocytic intracellular trafficking in the endosomal/prevacuolar compartments. The polypeptide is PRA1 family protein G2 (PRA1G2) (Arabidopsis thaliana (Mouse-ear cress)).